A 410-amino-acid polypeptide reads, in one-letter code: Peptidase T (410 aa).

H79 is a binding site for Zn(2+). The active site involves D81. Residue D142 coordinates Zn(2+). The active-site Proton acceptor is the E176. Residues E177, D199, and H381 each coordinate Zn(2+).

Belongs to the peptidase M20B family. Zn(2+) serves as cofactor.

It localises to the cytoplasm. It catalyses the reaction Release of the N-terminal residue from a tripeptide.. Its function is as follows. Cleaves the N-terminal amino acid of tripeptides. In Bacillus mycoides (strain KBAB4) (Bacillus weihenstephanensis), this protein is Peptidase T.